The primary structure comprises 333 residues: GTP 3',8-cyclase (333 aa).

One can recognise a Radical SAM core domain in the interval 7-221; the sequence is KFGRVHDYIR…FEACNEAGYE (215 aa). A GTP-binding site is contributed by arginine 16. Positions 23 and 27 each coordinate [4Fe-4S] cluster. Position 29 (tyrosine 29) interacts with S-adenosyl-L-methionine. Cysteine 30 contacts [4Fe-4S] cluster. Arginine 66 is a GTP binding site. Glycine 70 lines the S-adenosyl-L-methionine pocket. Threonine 97 serves as a coordination point for GTP. Residue serine 121 participates in S-adenosyl-L-methionine binding. Lysine 158 serves as a coordination point for GTP. Methionine 192 provides a ligand contact to S-adenosyl-L-methionine. 2 residues coordinate [4Fe-4S] cluster: cysteine 257 and cysteine 260. 262–264 contributes to the GTP binding site; that stretch reads RLR. [4Fe-4S] cluster is bound at residue cysteine 274.

It belongs to the radical SAM superfamily. MoaA family. Monomer and homodimer. [4Fe-4S] cluster is required as a cofactor.

It carries out the reaction GTP + AH2 + S-adenosyl-L-methionine = (8S)-3',8-cyclo-7,8-dihydroguanosine 5'-triphosphate + 5'-deoxyadenosine + L-methionine + A + H(+). Its pathway is cofactor biosynthesis; molybdopterin biosynthesis. Its function is as follows. Catalyzes the cyclization of GTP to (8S)-3',8-cyclo-7,8-dihydroguanosine 5'-triphosphate. This is GTP 3',8-cyclase from Listeria monocytogenes serovar 1/2a (strain ATCC BAA-679 / EGD-e).